Consider the following 341-residue polypeptide: NADH-quinone oxidoreductase subunit H 1 (341 aa).

9 consecutive transmembrane segments (helical) span residues 7 to 27 (IILT…ISLL), 46 to 66 (PNVV…KYIF), 80 to 100 (FFLA…VIPF), 111 to 131 (VAIL…IMGG), 157 to 177 (LGLI…SHIV), 183 to 203 (AFGL…LFFI), 244 to 264 (YIAI…GWLS), 273 to 293 (VFWM…VKAI), and 305 to 325 (IGWK…AFLA).

This sequence belongs to the complex I subunit 1 family. In terms of assembly, NDH-1 is composed of 14 different subunits. Subunits NuoA, H, J, K, L, M, N constitute the membrane sector of the complex.

The protein resides in the cell inner membrane. The enzyme catalyses a quinone + NADH + 5 H(+)(in) = a quinol + NAD(+) + 4 H(+)(out). In terms of biological role, NDH-1 shuttles electrons from NADH, via FMN and iron-sulfur (Fe-S) centers, to quinones in the respiratory chain. The immediate electron acceptor for the enzyme in this species is believed to be ubiquinone. Couples the redox reaction to proton translocation (for every two electrons transferred, four hydrogen ions are translocated across the cytoplasmic membrane), and thus conserves the redox energy in a proton gradient. This subunit may bind ubiquinone. The polypeptide is NADH-quinone oxidoreductase subunit H 1 (Cereibacter sphaeroides (strain ATCC 17029 / ATH 2.4.9) (Rhodobacter sphaeroides)).